The following is a 215-amino-acid chain: Serine acetyltransferase (215 aa).

The protein belongs to the transferase hexapeptide repeat family.

It is found in the cytoplasm. The catalysed reaction is L-serine + acetyl-CoA = O-acetyl-L-serine + CoA. It functions in the pathway amino-acid biosynthesis; L-cysteine biosynthesis; L-cysteine from L-serine: step 1/2. The polypeptide is Serine acetyltransferase (cysE) (Staphylococcus aureus (strain MRSA252)).